Reading from the N-terminus, the 144-residue chain is Deoxyuridine 5'-triphosphate nucleotidohydrolase (144 aa).

Residues 63–65 (RSG), Asn76, and 80–82 (TID) each bind substrate.

This sequence belongs to the dUTPase family. It depends on Mg(2+) as a cofactor.

The enzyme catalyses dUTP + H2O = dUMP + diphosphate + H(+). It participates in pyrimidine metabolism; dUMP biosynthesis; dUMP from dCTP (dUTP route): step 2/2. This enzyme is involved in nucleotide metabolism: it produces dUMP, the immediate precursor of thymidine nucleotides and it decreases the intracellular concentration of dUTP so that uracil cannot be incorporated into DNA. In Porphyromonas gingivalis (strain ATCC BAA-308 / W83), this protein is Deoxyuridine 5'-triphosphate nucleotidohydrolase.